The chain runs to 332 residues: o-succinylbenzoate synthase (332 aa).

Lys-135 functions as the Proton donor in the catalytic mechanism. Mg(2+) is bound by residues Asp-163, Glu-192, and Asp-215. The active-site Proton acceptor is Lys-241.

Belongs to the mandelate racemase/muconate lactonizing enzyme family. MenC type 1 subfamily. A divalent metal cation is required as a cofactor.

The catalysed reaction is (1R,6R)-6-hydroxy-2-succinyl-cyclohexa-2,4-diene-1-carboxylate = 2-succinylbenzoate + H2O. It participates in quinol/quinone metabolism; 1,4-dihydroxy-2-naphthoate biosynthesis; 1,4-dihydroxy-2-naphthoate from chorismate: step 4/7. It functions in the pathway quinol/quinone metabolism; menaquinone biosynthesis. Its function is as follows. Converts 2-succinyl-6-hydroxy-2,4-cyclohexadiene-1-carboxylate (SHCHC) to 2-succinylbenzoate (OSB). This Vibrio cholerae serotype O1 (strain ATCC 39315 / El Tor Inaba N16961) protein is o-succinylbenzoate synthase.